The chain runs to 197 residues: Probable calcium-binding protein CML21 (197 aa).

The interval 1–33 (MLRPPPPSSVLTASAAAARPPASVVQPQRQAAH) is disordered. A compositionally biased stretch (low complexity) spans 9–30 (SVLTASAAAARPPASVVQPQRQ). 3 EF-hand domains span residues 37-72 (AETL…LGAR), 126-161 (EKEA…MGLP), and 164-197 (ACMA…AAGN). Residues Asp-50, Asp-52, Asp-54, Glu-61, Asp-139, Asp-141, Asp-143, Tyr-145, Glu-150, Asp-177, Asp-179, Asp-181, Arg-183, and Glu-188 each coordinate Ca(2+).

In terms of biological role, potential calcium sensor. The sequence is that of Probable calcium-binding protein CML21 (CML21) from Oryza sativa subsp. japonica (Rice).